Here is a 463-residue protein sequence, read N- to C-terminus: Abscisic acid 8'-hydroxylase 3 (463 aa).

The chain crosses the membrane as a helical span at residues 6–26; that stretch reads LFLTLSAAALFLCLLRFIAGV. Position 411 (C411) interacts with heme.

The protein belongs to the cytochrome P450 family. It depends on heme as a cofactor. Mainly expressed in flower buds, flowers, rosette leaves and roots. Lower expression in mature siliques and inflorescence stems. Not expressed in dry seeds.

The protein localises to the membrane. It catalyses the reaction 2-cis-(+)-abscisate + reduced [NADPH--hemoprotein reductase] + O2 = (+)-8'-hydroxyabscisate + oxidized [NADPH--hemoprotein reductase] + H2O + H(+). The protein operates within plant hormone degradation; abscisic acid degradation. Its activity is regulated as follows. Inhibited by tetcyclcis, but not by metyrapone. Functionally, involved in the oxidative degradation of abscisic acid, but not in the isomerization of the produced 8'-hydroxyabscisic acid (8'-OH-ABA) to (-)-phaseic acid (PA). Involved in the control of postgermination growth. The polypeptide is Abscisic acid 8'-hydroxylase 3 (CYP707A3) (Arabidopsis thaliana (Mouse-ear cress)).